The sequence spans 239 residues: Protein Thf1 (239 aa).

A coiled-coil region spans residues 183–219 (ERVKKDLELYRSNLDRLKQARAIVEEMVKAARRQQER). Over residues 211 to 221 (KAARRQQERRQ) the composition is skewed to basic and acidic residues. Residues 211–239 (KAARRQQERRQSTASLPETPAADRRESSG) form a disordered region.

The protein belongs to the THF1 family.

Its function is as follows. May be involved in photosynthetic membrane biogenesis. In Synechococcus sp. (strain JA-3-3Ab) (Cyanobacteria bacterium Yellowstone A-Prime), this protein is Protein Thf1.